A 1125-amino-acid chain; its full sequence is Telomerase reverse transcriptase (1125 aa).

The interval 1 to 239 (MPRAPRCPAV…TKRLLSLTST (239 aa)) is RNA-interacting domain 1. Residues 58-205 (VPWGSQPPPA…RPVGGNFTNL (148 aa)) are GQ motif. Residues 137–141 (WMLLL) form a required for regulating specificity for telomeric DNA and for processivity for primer elongation region. The span at 206-216 (GSAHQIKNSGH) shows a compositional bias: polar residues. A disordered region spans residues 206–304 (GSAHQIKNSG…ASDPSLSGSV (99 aa)). Residues 240-328 (NVPSAKKARF…PPQDAEKLRP (89 aa)) are linker. A compositionally biased stretch (basic and acidic residues) spans 247–259 (ARFEPALRVDKGP). The span at 273 to 287 (APSPAASPKVPPAAK) shows a compositional bias: low complexity. The segment at 306 to 528 (CKHKPSSSSL…VPAAEHRLRE (223 aa)) is required for oligomerization. Positions 329 to 540 (FTETRHFLYS…LAMFLFWLMD (212 aa)) are RNA-interacting domain 2. The TFLY; involved in RNA binding signature appears at 332-337 (TRHFLY). Positions 381–511 (FCRTRRLPRR…VKVEDCHWLR (131 aa)) are QFP motif. Residues 402-422 (LMNHAKCQYVRFLRSHCRFRT) are CP motif. Residue serine 447 is modified to Phosphoserine; by DYRK2. In terms of domain architecture, Reverse transcriptase spans 595–928 (EVKHHQDTWL…CLFPWCGLLL (334 aa)). A Phosphotyrosine; by SRC-type Tyr-kinases modification is found at tyrosine 697. Mg(2+)-binding residues include aspartate 702, aspartate 861, and aspartate 862. The segment at 907-921 (LGGAAPHQLPAHCLF) is required for oligomerization. The segment at 923–927 (WCGLL) is primer grip sequence. Positions 929 to 1125 (DTRTLEVFCD…LSTDFQTILD (197 aa)) are CTE.

It belongs to the reverse transcriptase family. Telomerase subfamily. In terms of assembly, catalytic component of the telomerase holoenzyme complex composed of one molecule of TERT, one molecule of WRAP53/TCAB1, two molecules of H/ACA ribonucleoprotein complex subunits DKC1, NOP10, NHP2 and GAR1, and a telomerase RNA template component (TERC). The telomerase holoenzyme complex is associated with TEP1, SMG6/EST1A and POT1. The molecular chaperone HSP90/P23 complex is required for correct assembly and stabilization of the active telomerase. Interacts directly with HSP90A and PTGES3. Interacts with HSPA1A; the interaction occurs in the absence of TERC and dissociates once the complex has formed. Interacts with RAN; the interaction promotes nuclear export of TERT. Interacts with XPO1. Interacts with PTPN11; the interaction retains TERT in the nucleus. Interacts with NCL (via RRM1 and C-terminal RRM4/Arg/Gly-rich domains); the interaction is important for nucleolar localization of TERT. Interacts with SMARCA4 (via the bromodomain); the interaction regulates Wnt-mediated signaling. Interacts with MCRS1 (isoform MCRS2); the interaction inhibits in vitro telomerase activity. Interacts with PIF1; the interaction has no effect on the elongation activity of TERT. Interacts with PML; the interaction recruits TERT to PML bodies and inhibits telomerase activity. Interacts with GNL3L. Interacts with isoform 1 and isoform 2 of NVL. Interacts with DHX36. Interacts with ATF7. Post-translationally, phosphorylation at Tyr-697 under oxidative stress leads to translocation of TERT to the cytoplasm and reduces its antiapoptotic activity. Dephosphorylated by SHP2/PTPN11 leading to nuclear retention. Phosphorylation at the G2/M phase at Ser-447 by DYRK2 promotes ubiquitination by the EDVP complex and degradation. Ubiquitinated by the EDVP complex, a E3 ligase complex following phosphorylation at Ser-447 by DYRK2. Ubiquitinated leads to proteasomal degradation. In terms of tissue distribution, isoform 1 and isoform 2 expressed in thymus, liver, spleen, lung, kidney and testis. High level of inactive isoform 3 in adult hippocampus, low level in heart, cortex and cerebellum.

It localises to the nucleus. The protein localises to the nucleolus. The protein resides in the nucleoplasm. Its subcellular location is the chromosome. It is found in the telomere. It localises to the cytoplasm. The protein localises to the PML body. It catalyses the reaction DNA(n) + a 2'-deoxyribonucleoside 5'-triphosphate = DNA(n+1) + diphosphate. In terms of biological role, telomerase is a ribonucleoprotein enzyme essential for the replication of chromosome termini in most eukaryotes. Active in progenitor and cancer cells. Inactive, or very low activity, in normal somatic cells. Catalytic component of the teleromerase holoenzyme complex whose main activity is the elongation of telomeres by acting as a reverse transcriptase that adds simple sequence repeats to chromosome ends by copying a template sequence within the RNA component of the enzyme. Catalyzes the RNA-dependent extension of 3'-chromosomal termini with the 6-nucleotide telomeric repeat unit, 5'-TTAGGG-3'. The catalytic cycle involves primer binding, primer extension and release of product once the template boundary has been reached or nascent product translocation followed by further extension. More active on substrates containing 2 or 3 telomeric repeats. Telomerase activity is regulated by a number of factors including telomerase complex-associated proteins, chaperones and polypeptide modifiers. Modulates Wnt signaling. Plays important roles in aging and antiapoptosis. The polypeptide is Telomerase reverse transcriptase (Rattus norvegicus (Rat)).